A 370-amino-acid polypeptide reads, in one-letter code: UDP-N-acetylglucosamine--N-acetylmuramyl-(pentapeptide) pyrophosphoryl-undecaprenol N-acetylglucosamine transferase (370 aa).

UDP-N-acetyl-alpha-D-glucosamine-binding positions include 10 to 12 (TGG), Asn-124, Arg-166, Ser-198, Ile-252, and Gln-297.

It belongs to the glycosyltransferase 28 family. MurG subfamily.

The protein localises to the cell membrane. It catalyses the reaction di-trans,octa-cis-undecaprenyl diphospho-N-acetyl-alpha-D-muramoyl-L-alanyl-D-glutamyl-meso-2,6-diaminopimeloyl-D-alanyl-D-alanine + UDP-N-acetyl-alpha-D-glucosamine = di-trans,octa-cis-undecaprenyl diphospho-[N-acetyl-alpha-D-glucosaminyl-(1-&gt;4)]-N-acetyl-alpha-D-muramoyl-L-alanyl-D-glutamyl-meso-2,6-diaminopimeloyl-D-alanyl-D-alanine + UDP + H(+). It functions in the pathway cell wall biogenesis; peptidoglycan biosynthesis. Functionally, cell wall formation. Catalyzes the transfer of a GlcNAc subunit on undecaprenyl-pyrophosphoryl-MurNAc-pentapeptide (lipid intermediate I) to form undecaprenyl-pyrophosphoryl-MurNAc-(pentapeptide)GlcNAc (lipid intermediate II). The protein is UDP-N-acetylglucosamine--N-acetylmuramyl-(pentapeptide) pyrophosphoryl-undecaprenol N-acetylglucosamine transferase of Finegoldia magna (strain ATCC 29328 / DSM 20472 / WAL 2508) (Peptostreptococcus magnus).